The following is a 202-amino-acid chain: Glycerol-3-phosphate acyltransferase (202 aa).

Helical transmembrane passes span 11–31 (LLLF…GMVI), 60–80 (AAAA…VLLA), 88–108 (AAQL…WLGF), 117–137 (FLGL…LTWL), and 162–182 (LLLG…VILW).

It belongs to the PlsY family. In terms of assembly, probably interacts with PlsX.

It localises to the cell inner membrane. It catalyses the reaction an acyl phosphate + sn-glycerol 3-phosphate = a 1-acyl-sn-glycero-3-phosphate + phosphate. It participates in lipid metabolism; phospholipid metabolism. Functionally, catalyzes the transfer of an acyl group from acyl-phosphate (acyl-PO(4)) to glycerol-3-phosphate (G3P) to form lysophosphatidic acid (LPA). This enzyme utilizes acyl-phosphate as fatty acyl donor, but not acyl-CoA or acyl-ACP. This is Glycerol-3-phosphate acyltransferase from Ruegeria sp. (strain TM1040) (Silicibacter sp.).